Reading from the N-terminus, the 251-residue chain is MVDQEKETTHFGFRTVAKEQKEGMVAEVFHSVAAKYDLMNDLMSFGVHRIWKRFTIDCSGVRRGQRVLDLAGGTGDLTAKFSRLVGEQGEVVLADINESMLRMGREKLRDKGIVGNVSYVQANAEALPFPDNYFDCITISFGLRNVTEKEKALRSMFRVLKPGGRLLVLEFSKPLLEPLSKAYDAYSFHILPKIGELVAQDSESYRYLAESIRMHPDQETLKSMMMDAGFENVTYSNLTGGIVALHRGFKF.

S-adenosyl-L-methionine-binding positions include Thr-74, Asp-95, 123-124, and Ser-140; that span reads NA.

It belongs to the class I-like SAM-binding methyltransferase superfamily. MenG/UbiE family.

It carries out the reaction a 2-demethylmenaquinol + S-adenosyl-L-methionine = a menaquinol + S-adenosyl-L-homocysteine + H(+). The enzyme catalyses a 2-methoxy-6-(all-trans-polyprenyl)benzene-1,4-diol + S-adenosyl-L-methionine = a 5-methoxy-2-methyl-3-(all-trans-polyprenyl)benzene-1,4-diol + S-adenosyl-L-homocysteine + H(+). Its pathway is quinol/quinone metabolism; menaquinone biosynthesis; menaquinol from 1,4-dihydroxy-2-naphthoate: step 2/2. The protein operates within cofactor biosynthesis; ubiquinone biosynthesis. Methyltransferase required for the conversion of demethylmenaquinol (DMKH2) to menaquinol (MKH2) and the conversion of 2-polyprenyl-6-methoxy-1,4-benzoquinol (DDMQH2) to 2-polyprenyl-3-methyl-6-methoxy-1,4-benzoquinol (DMQH2). This chain is Ubiquinone/menaquinone biosynthesis C-methyltransferase UbiE, found in Yersinia enterocolitica serotype O:8 / biotype 1B (strain NCTC 13174 / 8081).